We begin with the raw amino-acid sequence, 224 residues long: dTDP-fucosamine acetyltransferase (224 aa).

The N-acetyltransferase domain maps to 94 to 224; sequence PALRQLASAA…VESTAYWLYR (131 aa). Residues 168–174, N201, and R207 contribute to the acetyl-CoA site; that span reads LAGRGAG. Y208 acts as the Proton donor in catalysis.

The protein belongs to the WecD family. Homodimer.

The enzyme catalyses dTDP-4-amino-4,6-dideoxy-alpha-D-galactose + acetyl-CoA = dTDP-4-acetamido-4,6-dideoxy-alpha-D-galactose + CoA + H(+). It functions in the pathway bacterial outer membrane biogenesis; enterobacterial common antigen biosynthesis. Catalyzes the acetylation of dTDP-fucosamine (dTDP-4-amino-4,6-dideoxy-D-galactose) to dTDP-Fuc4NAc, which is utilized in the biosynthesis of the enterobacterial common antigen (ECA). This chain is dTDP-fucosamine acetyltransferase, found in Escherichia coli O6:H1 (strain CFT073 / ATCC 700928 / UPEC).